Here is a 433-residue protein sequence, read N- to C-terminus: MTDFSPREIVSELDRFIVGQADAKRAVAIALRNRWRRLQLEGALREEVLPKNILMIGPTGVGKTEIARRLAKLANAPFLKVEATKFTEVGYVGRDVEQIIRDLVEVAIAQVREKKRKDVQARAQIAAEERVLDALVGPGSSPATRDSFRRKLRTGELNDKEIEIETQAGGGSPMFEIPGMPGGQIGAISIGDIFGKMGGRTKTRRLTVVDSHDILVNEEADKLLDNDQLVQEAINAVENNGIVFLDEIDKICVRDGRSGGEVSREGVQRDLLPLIEGTTVATKHGAVKTDHILFIASGAFHIAKPSDLLPELQGRLPIRVELNALSRDDMRRILTEPEASLIKQYVALLQTEGVTLEFGDDAIDALADVAVAVNSTVENIGARRLQTVMERVLDDISFGAPDRGGETIRIDADYVQKNVGDLAKNTDLSRFIL.

Residues V18, 60 to 65, D246, E311, and R383 contribute to the ATP site; that span reads GVGKTE.

It belongs to the ClpX chaperone family. HslU subfamily. In terms of assembly, a double ring-shaped homohexamer of HslV is capped on each side by a ring-shaped HslU homohexamer. The assembly of the HslU/HslV complex is dependent on binding of ATP.

The protein localises to the cytoplasm. Its function is as follows. ATPase subunit of a proteasome-like degradation complex; this subunit has chaperone activity. The binding of ATP and its subsequent hydrolysis by HslU are essential for unfolding of protein substrates subsequently hydrolyzed by HslV. HslU recognizes the N-terminal part of its protein substrates and unfolds these before they are guided to HslV for hydrolysis. The polypeptide is ATP-dependent protease ATPase subunit HslU (Rhodopseudomonas palustris (strain HaA2)).